The chain runs to 122 residues: Large ribosomal subunit protein uL14 (122 aa).

This sequence belongs to the universal ribosomal protein uL14 family. In terms of assembly, part of the 50S ribosomal subunit. Forms a cluster with proteins L3 and L19. In the 70S ribosome, L14 and L19 interact and together make contacts with the 16S rRNA in bridges B5 and B8.

Functionally, binds to 23S rRNA. Forms part of two intersubunit bridges in the 70S ribosome. This Bacillus mycoides (strain KBAB4) (Bacillus weihenstephanensis) protein is Large ribosomal subunit protein uL14.